The sequence spans 257 residues: Triosephosphate isomerase, cytosolic (257 aa).

The substrate site is built by Asn10 and Lys12. His96 (electrophile) is an active-site residue. Glu167 (proton acceptor) is an active-site residue.

The protein belongs to the triosephosphate isomerase family. As to quaternary structure, homodimer. In terms of tissue distribution, higher levels found in leaves than in roots.

The protein resides in the cytoplasm. The enzyme catalyses D-glyceraldehyde 3-phosphate = dihydroxyacetone phosphate. It participates in carbohydrate biosynthesis; gluconeogenesis. It functions in the pathway carbohydrate degradation; glycolysis; D-glyceraldehyde 3-phosphate from glycerone phosphate: step 1/1. The chain is Triosephosphate isomerase, cytosolic (TPI) from Stellaria longipes (Longstalk starwort).